Here is a 335-residue protein sequence, read N- to C-terminus: Rho guanine nucleotide exchange factor 39 (335 aa).

The region spanning 22 to 197 (KRACTARELL…SETAQRVHTI (176 aa)) is the DH domain. In terms of domain architecture, PH spans 227–331 (WFLRQGWLLV…WYHSLTWAIS (105 aa)).

As to expression, strongly expressed in hepatocellular carcinoma (HCC) compared with their non-cancerous counterparts.

It is found in the cell membrane. Promotes cell proliferation. The protein is Rho guanine nucleotide exchange factor 39 (ARHGEF39) of Homo sapiens (Human).